The chain runs to 210 residues: Orotate phosphoribosyltransferase (210 aa).

5-phospho-alpha-D-ribose 1-diphosphate contacts are provided by residues R94, K98, H100, and E120 to S128. Orotate is bound at residue S124.

It belongs to the purine/pyrimidine phosphoribosyltransferase family. PyrE subfamily. As to quaternary structure, homodimer. Mg(2+) is required as a cofactor.

It carries out the reaction orotidine 5'-phosphate + diphosphate = orotate + 5-phospho-alpha-D-ribose 1-diphosphate. The protein operates within pyrimidine metabolism; UMP biosynthesis via de novo pathway; UMP from orotate: step 1/2. Catalyzes the transfer of a ribosyl phosphate group from 5-phosphoribose 1-diphosphate to orotate, leading to the formation of orotidine monophosphate (OMP). This is Orotate phosphoribosyltransferase from Bacillus cereus (strain ATCC 14579 / DSM 31 / CCUG 7414 / JCM 2152 / NBRC 15305 / NCIMB 9373 / NCTC 2599 / NRRL B-3711).